Here is a 151-residue protein sequence, read N- to C-terminus: Large-conductance mechanosensitive channel (151 aa).

2 helical membrane-spanning segments follow: residues 14–34 (VVDM…VNSL) and 85–105 (GLFV…FLLV).

This sequence belongs to the MscL family. In terms of assembly, homopentamer.

The protein localises to the cell inner membrane. Functionally, channel that opens in response to stretch forces in the membrane lipid bilayer. May participate in the regulation of osmotic pressure changes within the cell. The sequence is that of Large-conductance mechanosensitive channel from Chlorobaculum tepidum (strain ATCC 49652 / DSM 12025 / NBRC 103806 / TLS) (Chlorobium tepidum).